We begin with the raw amino-acid sequence, 230 residues long: Phosphoribosylformylglycinamidine synthase subunit PurQ (230 aa).

Positions 2–230 (KIAVTKFLGT…KGMIDYAKRI (229 aa)) constitute a Glutamine amidotransferase type-1 domain. The Nucleophile role is filled by Cys-85. Active-site residues include His-202 and Glu-204.

As to quaternary structure, part of the FGAM synthase complex composed of 1 PurL, 1 PurQ and 2 PurS subunits.

It is found in the cytoplasm. It carries out the reaction N(2)-formyl-N(1)-(5-phospho-beta-D-ribosyl)glycinamide + L-glutamine + ATP + H2O = 2-formamido-N(1)-(5-O-phospho-beta-D-ribosyl)acetamidine + L-glutamate + ADP + phosphate + H(+). The catalysed reaction is L-glutamine + H2O = L-glutamate + NH4(+). It functions in the pathway purine metabolism; IMP biosynthesis via de novo pathway; 5-amino-1-(5-phospho-D-ribosyl)imidazole from N(2)-formyl-N(1)-(5-phospho-D-ribosyl)glycinamide: step 1/2. Its function is as follows. Part of the phosphoribosylformylglycinamidine synthase complex involved in the purines biosynthetic pathway. Catalyzes the ATP-dependent conversion of formylglycinamide ribonucleotide (FGAR) and glutamine to yield formylglycinamidine ribonucleotide (FGAM) and glutamate. The FGAM synthase complex is composed of three subunits. PurQ produces an ammonia molecule by converting glutamine to glutamate. PurL transfers the ammonia molecule to FGAR to form FGAM in an ATP-dependent manner. PurS interacts with PurQ and PurL and is thought to assist in the transfer of the ammonia molecule from PurQ to PurL. The polypeptide is Phosphoribosylformylglycinamidine synthase subunit PurQ (Methanocaldococcus jannaschii (strain ATCC 43067 / DSM 2661 / JAL-1 / JCM 10045 / NBRC 100440) (Methanococcus jannaschii)).